The following is a 159-amino-acid chain: Histone H2A (159 aa).

A compositionally biased stretch (gly residues) spans 1 to 10; it reads MDSTGTGAGG. 2 disordered regions span residues 1-31 and 133-159; these read MDSTGTGAGGKGKKGAAGRKVGGPRKKSVSR and KTAEKASSGGSKEAKSPKKAAKSPKKA. Basic residues-rich tracts occupy residues 11-29 and 149-159; these read KGKKGAAGRKVGGPRKKSV and PKKAAKSPKKA. Short sequence motifs (SPKK motif) lie at residues 148–151 and 155–158; these read SPKK.

Belongs to the histone H2A family. In terms of assembly, the nucleosome is a histone octamer containing two molecules each of H2A, H2B, H3 and H4 assembled in one H3-H4 heterotetramer and two H2A-H2B heterodimers. The octamer wraps approximately 147 bp of DNA.

The protein resides in the nucleus. The protein localises to the chromosome. Functionally, core component of nucleosome. Nucleosomes wrap and compact DNA into chromatin, limiting DNA accessibility to the cellular machineries which require DNA as a template. Histones thereby play a central role in transcription regulation, DNA repair, DNA replication and chromosomal stability. DNA accessibility is regulated via a complex set of post-translational modifications of histones, also called histone code, and nucleosome remodeling. The chain is Histone H2A from Zea mays (Maize).